Consider the following 178-residue polypeptide: Large ribosomal subunit protein uL6 (178 aa).

The protein belongs to the universal ribosomal protein uL6 family. Part of the 50S ribosomal subunit.

In terms of biological role, this protein binds to the 23S rRNA, and is important in its secondary structure. It is located near the subunit interface in the base of the L7/L12 stalk, and near the tRNA binding site of the peptidyltransferase center. The polypeptide is Large ribosomal subunit protein uL6 (Geobacillus kaustophilus (strain HTA426)).